A 302-amino-acid polypeptide reads, in one-letter code: Sulfate adenylyltransferase subunit 2 (302 aa).

Belongs to the PAPS reductase family. CysD subfamily. As to quaternary structure, heterodimer composed of CysD, the smaller subunit, and CysN.

It carries out the reaction sulfate + ATP + H(+) = adenosine 5'-phosphosulfate + diphosphate. It functions in the pathway sulfur metabolism; hydrogen sulfide biosynthesis; sulfite from sulfate: step 1/3. Functionally, with CysN forms the ATP sulfurylase (ATPS) that catalyzes the adenylation of sulfate producing adenosine 5'-phosphosulfate (APS) and diphosphate, the first enzymatic step in sulfur assimilation pathway. APS synthesis involves the formation of a high-energy phosphoric-sulfuric acid anhydride bond driven by GTP hydrolysis by CysN coupled to ATP hydrolysis by CysD. The chain is Sulfate adenylyltransferase subunit 2 from Escherichia coli O6:K15:H31 (strain 536 / UPEC).